The primary structure comprises 614 residues: Dihydroxy-acid dehydratase (614 aa).

Asp-81 contacts Mg(2+). Residue Cys-122 participates in [2Fe-2S] cluster binding. Mg(2+) is bound by residues Asp-123 and Lys-124. Lys-124 is subject to N6-carboxylysine. Cys-196 contributes to the [2Fe-2S] cluster binding site. Glu-492 contributes to the Mg(2+) binding site. Ser-518 serves as the catalytic Proton acceptor.

This sequence belongs to the IlvD/Edd family. As to quaternary structure, homodimer. [2Fe-2S] cluster is required as a cofactor. The cofactor is Mg(2+).

It catalyses the reaction (2R)-2,3-dihydroxy-3-methylbutanoate = 3-methyl-2-oxobutanoate + H2O. It carries out the reaction (2R,3R)-2,3-dihydroxy-3-methylpentanoate = (S)-3-methyl-2-oxopentanoate + H2O. Its pathway is amino-acid biosynthesis; L-isoleucine biosynthesis; L-isoleucine from 2-oxobutanoate: step 3/4. The protein operates within amino-acid biosynthesis; L-valine biosynthesis; L-valine from pyruvate: step 3/4. In terms of biological role, functions in the biosynthesis of branched-chain amino acids. Catalyzes the dehydration of (2R,3R)-2,3-dihydroxy-3-methylpentanoate (2,3-dihydroxy-3-methylvalerate) into 2-oxo-3-methylpentanoate (2-oxo-3-methylvalerate) and of (2R)-2,3-dihydroxy-3-methylbutanoate (2,3-dihydroxyisovalerate) into 2-oxo-3-methylbutanoate (2-oxoisovalerate), the penultimate precursor to L-isoleucine and L-valine, respectively. This is Dihydroxy-acid dehydratase from Ruegeria sp. (strain TM1040) (Silicibacter sp.).